The chain runs to 464 residues: tRNA modification GTPase MnmE (464 aa).

(6S)-5-formyl-5,6,7,8-tetrahydrofolate contacts are provided by R25, E87, and K130. In terms of domain architecture, TrmE-type G spans 226-386 (GLSVVLAGQP…LRAELLRIAG (161 aa)). N236 lines the K(+) pocket. GTP contacts are provided by residues 236-241 (NVGKSS), 255-261 (TPIAGTT), and 280-283 (DTAG). Mg(2+) is bound at residue S240. K(+)-binding residues include T255, I257, and T260. Mg(2+) is bound at residue T261. K464 lines the (6S)-5-formyl-5,6,7,8-tetrahydrofolate pocket.

It belongs to the TRAFAC class TrmE-Era-EngA-EngB-Septin-like GTPase superfamily. TrmE GTPase family. As to quaternary structure, homodimer. Heterotetramer of two MnmE and two MnmG subunits. It depends on K(+) as a cofactor.

It is found in the cytoplasm. In terms of biological role, exhibits a very high intrinsic GTPase hydrolysis rate. Involved in the addition of a carboxymethylaminomethyl (cmnm) group at the wobble position (U34) of certain tRNAs, forming tRNA-cmnm(5)s(2)U34. This is tRNA modification GTPase MnmE from Burkholderia orbicola (strain AU 1054).